The following is a 468-amino-acid chain: Serine/threonine-protein kinase ULK3 (468 aa).

One can recognise a Protein kinase domain in the interval 13-269 (FILTEKLGSG…FIEFFAHLFV (257 aa)). ATP contacts are provided by residues 19-27 (LGSGSYATV) and Lys43. The active-site Proton acceptor is the Asp136. MIT domains lie at 279–347 (TLEK…KVLV) and 374–442 (RLFS…KEQM).

It belongs to the protein kinase superfamily. Ser/Thr protein kinase family. APG1/unc-51/ULK1 subfamily.

Its subcellular location is the cytoplasm. The catalysed reaction is L-seryl-[protein] + ATP = O-phospho-L-seryl-[protein] + ADP + H(+). It carries out the reaction L-threonyl-[protein] + ATP = O-phospho-L-threonyl-[protein] + ADP + H(+). Its function is as follows. Serine/threonine protein kinase that acts as a regulator of Sonic hedgehog (SHH) signaling and autophagy. In Xenopus laevis (African clawed frog), this protein is Serine/threonine-protein kinase ULK3 (ulk3).